A 991-amino-acid polypeptide reads, in one-letter code: Ribonuclease TUDOR 1 (991 aa).

Alanine 2 carries the N-acetylalanine modification. 4 consecutive TNase-like domains span residues 8–151 (QWLK…RWSK), 186–364 (KPME…MWAN), 378–557 (QNFT…IHSA), and 587–714 (RRIP…IWEN). Residues 227 to 250 (RTTNGSVVETVPDEPNGDVSAESR) form a disordered region. The 66-residue stretch at 782 to 847 (NPKRGDIVLA…RPIDPSVSAA (66 aa)) folds into the Tudor domain. Residue tyrosine 970 is modified to Phosphotyrosine. The interval 971–991 (GDIESDDEDTGPARKPAGGRR) is disordered. Serine 975 is modified (phosphoserine). Threonine 980 is subject to Phosphothreonine.

As to expression, expressed in seeds, leaves, flowers, roots and siliques (at protein level). Accumulates in the cap and elongation zone of the root apices (at protein level).

It localises to the cytoplasm. It is found in the cytoplasmic granule. The protein resides in the perinuclear region. Its subcellular location is the endoplasmic reticulum. Repressed by the specific inhibitor 3',5'-deoxythymidine bisphosphate (pdTp); this RNase activity inhibition impairs subcellular relocation upon abiotic stress and leads to reduced stress resistance. Cytoprotective ribonuclease (RNase) required for resistance to abiotic stresses, acting as a positive regulator of mRNA decapping during stress. Essential for the integrity and function of cytoplasmic messenger ribonucleoprotein (mRNP) complexes called stress granules (SGs) and processing bodies (PBs), sites of post-transcriptional gene regulation during stress (e.g. salt and heat). Involved in gibberellic acid (GA) biosynthesis. Essential for stress tolerance, probably by regulating mRNAs entering the secretory pathway. Component of stress granules (SGs) that regulates growth under salt stress by modulating levels of GA20OX3 mRNA. Binds GA20OX3 mRNA. May inhibit the degradation of mRNAs involved in stress adaptation. The protein is Ribonuclease TUDOR 1 of Arabidopsis thaliana (Mouse-ear cress).